A 78-amino-acid chain; its full sequence is UPF0349 protein BH3414 (78 aa).

The protein belongs to the UPF0349 family.

The protein is UPF0349 protein BH3414 of Halalkalibacterium halodurans (strain ATCC BAA-125 / DSM 18197 / FERM 7344 / JCM 9153 / C-125) (Bacillus halodurans).